Here is a 366-residue protein sequence, read N- to C-terminus: Putative integrase/recombinase HI_1572 (366 aa).

One can recognise a Core-binding (CB) domain in the interval 54 to 133; sequence ITLDELIDKY…SLSALMAKTI (80 aa). Residues 168-331 enclose the Tyr recombinase domain; the sequence is IFVSGYDVEH…DMAEGYKTKA (164 aa). Active-site residues include arginine 201, lysine 226, and histidine 308. Tyrosine 318 serves as the catalytic O-(3'-phospho-DNA)-tyrosine intermediate.

The protein belongs to the 'phage' integrase family.

The sequence is that of Putative integrase/recombinase HI_1572 from Haemophilus influenzae (strain ATCC 51907 / DSM 11121 / KW20 / Rd).